An 86-amino-acid chain; its full sequence is Stage V sporulation protein S (86 aa).

Functionally, interferes with sporulation at an early stage. Seems to play a positive role in allowing cells to progress beyond stage V of sporulation. In Bacillus subtilis (strain 168), this protein is Stage V sporulation protein S.